Consider the following 100-residue polypeptide: UPF0213 protein YhbQ (100 aa).

Positions 2 to 77 (TPWFLYLIRT…KQLTKRQKER (76 aa)) constitute a GIY-YIG domain.

The protein belongs to the UPF0213 family.

This Escherichia coli O157:H7 protein is UPF0213 protein YhbQ.